A 448-amino-acid polypeptide reads, in one-letter code: Asparagine--tRNA ligase (448 aa).

It belongs to the class-II aminoacyl-tRNA synthetase family. Homodimer.

It localises to the cytoplasm. It carries out the reaction tRNA(Asn) + L-asparagine + ATP = L-asparaginyl-tRNA(Asn) + AMP + diphosphate + H(+). The protein is Asparagine--tRNA ligase of Streptococcus thermophilus (strain CNRZ 1066).